The following is a 99-amino-acid chain: Cell division protein FtsB (99 aa).

Residues 1–3 (MKF) lie on the Cytoplasmic side of the membrane. The chain crosses the membrane as a helical span at residues 4–21 (FVIALIVLLGLLQYRLWS). Residues 22 to 99 (GDNSLPEYFV…GDRSVSSPSQ (78 aa)) are Periplasmic-facing. Residues 31–73 (VLQKQIAAQQEGNAKLNERNQVLKEEIIDLKSGTEAIEERARN) are a coiled coil.

Belongs to the FtsB family. In terms of assembly, part of a complex composed of FtsB, FtsL and FtsQ.

Its subcellular location is the cell inner membrane. Functionally, essential cell division protein. May link together the upstream cell division proteins, which are predominantly cytoplasmic, with the downstream cell division proteins, which are predominantly periplasmic. The protein is Cell division protein FtsB of Shewanella sp. (strain ANA-3).